A 908-amino-acid polypeptide reads, in one-letter code: Metabotropic glutamate receptor 8 (908 aa).

An N-terminal signal peptide occupies residues Met-1–Ser-33. Residues Gln-34–Trp-583 lie on the Extracellular side of the membrane. Residues Cys-64 and Cys-106 are joined by a disulfide bond. The N-linked (GlcNAc...) asparagine glycan is linked to Asn-95. L-glutamate-binding positions include Ser-156, Ala-177 to Thr-179, and Tyr-227. Cystine bridges form between Cys-246–Cys-534, Cys-369–Cys-384, Cys-424–Cys-431, Cys-516–Cys-535, Cys-520–Cys-538, Cys-541–Cys-553, and Cys-556–Cys-569. Residue Asn-298 is glycosylated (N-linked (GlcNAc...) asparagine). Asp-309 is an L-glutamate binding site. Lys-401 lines the L-glutamate pocket. Residues Asn-452 and Asn-480 are each glycosylated (N-linked (GlcNAc...) asparagine). N-linked (GlcNAc...) asparagine glycosylation is present at Asn-565. Residues Ala-584–Tyr-608 traverse the membrane as a helical segment. Residues Asn-609–Glu-620 lie on the Cytoplasmic side of the membrane. The helical transmembrane segment at Leu-621–Ala-641 threads the bilayer. The Extracellular segment spans residues Ala-642–Ile-647. The chain crosses the membrane as a helical span at residues Cys-648–Thr-668. Residues Lys-669–Gln-695 lie on the Cytoplasmic side of the membrane. Residues Leu-696 to Val-716 form a helical membrane-spanning segment. The Extracellular segment spans residues Asp-717–Asp-746. Residues Leu-747–Ile-768 traverse the membrane as a helical segment. The Cytoplasmic segment spans residues Lys-769 to Lys-781. A helical membrane pass occupies residues Pro-782–Gly-803. Over Thr-804–Leu-818 the chain is Extracellular. The helical transmembrane segment at Thr-819–Phe-843 threads the bilayer. Residues His-844–Ile-908 are Cytoplasmic-facing. Lys-882 participates in a covalent cross-link: Glycyl lysine isopeptide (Lys-Gly) (interchain with G-Cter in SUMO1).

The protein belongs to the G-protein coupled receptor 3 family. Interacts with PICK1.

It localises to the cell membrane. Its function is as follows. G-protein coupled receptor for glutamate. Ligand binding causes a conformation change that triggers signaling via guanine nucleotide-binding proteins (G proteins) and modulates the activity of down-stream effectors, such as adenylate cyclase. Signaling inhibits adenylate cyclase activity. This is Metabotropic glutamate receptor 8 (GRM8) from Homo sapiens (Human).